The primary structure comprises 513 residues: GMP synthase [glutamine-hydrolyzing] (513 aa).

Positions Leu5–Asp195 constitute a Glutamine amidotransferase type-1 domain. Cys82 (nucleophile) is an active-site residue. Residues His169 and Glu171 contribute to the active site. Residues Trp196 to Arg388 form the GMPS ATP-PPase domain. Ser223 to Ser229 provides a ligand contact to ATP.

As to quaternary structure, homodimer.

The enzyme catalyses XMP + L-glutamine + ATP + H2O = GMP + L-glutamate + AMP + diphosphate + 2 H(+). It functions in the pathway purine metabolism; GMP biosynthesis; GMP from XMP (L-Gln route): step 1/1. Its function is as follows. Catalyzes the synthesis of GMP from XMP. In Clostridium botulinum (strain Alaska E43 / Type E3), this protein is GMP synthase [glutamine-hydrolyzing].